The sequence spans 680 residues: MGRIKKKGESGAAKNYITRTQAVRKLQISLPDFRKLCIWKGIYPREPRNKKKVSKSATASTTFYYTKDIQYLLHEPLLAKFRDQKVLEKKISRALGRGDVSDAKRLEGNAARPENTGKPSYTLDHVVRERYPTFVDALRDLDDCLSMLFLFANLPATSSVPAKMIARCERLCLEFQHYLIVSHSLQKSFLSIKGIYYQANIQGEDILWLVPYKFNQRVVGDIDFRIMGTFIEFYMTLLGFVNFRLYTSIGLKYPPKFDATKDDKAADLAAFTLEGAGLTSNGAQPDAIMEGTSESTPDPKLQAKVNKLVKELKSGEDEKPKAITNGEGESETPTDAIDKFEPAAPGGDVLLQPSYSTSDPSQLFANCTIYLSREAPRQALEFILRAFGCKRIGWDEVLGDGAFTTNELDPNITHQIVDRPPVTAVDNDEGEDNQTAQKVGGRVPGRIYVQPQWVWDSINDEELKEPNQYAPGAQLPPHLSPFVKARAGQYDPTVPLEEQQTEAEALKGDSDVEDEEEADGAEADEDDDEAVLAIENGEMDVAGSDDDDDEEDEEADAGFGGFSDAEVDDASEDDEQTSAALQRQIELEAELSGKSVKASEADKQAADPKSKAKQQKRKELQRKAKEEAEDLERAKGMLSKKKRKLFEQMTYSNNKKDAESEKLREKRRRIERKMAKGKAT.

Residues 315–336 (GEDEKPKAITNGEGESETPTDA) are disordered. Residues 359-471 (DPSQLFANCT…ELKEPNQYAP (113 aa)) form the BRCT domain. The tract at residues 494–680 (VPLEEQQTEA…ERKMAKGKAT (187 aa)) is disordered. Composition is skewed to acidic residues over residues 511–530 (DVED…DDEA), 543–556 (GSDD…EEAD), and 565–576 (AEVDDASEDDEQ). Basic and acidic residues-rich tracts occupy residues 597-610 (KASE…DPKS), 617-635 (RKEL…ERAK), and 654-664 (NKKDAESEKLR). Residues 609-680 (KSKAKQQKRK…ERKMAKGKAT (72 aa)) are a coiled coil. Over residues 665–680 (EKRRRIERKMAKGKAT) the composition is skewed to basic residues.

The protein belongs to the pescadillo family. As to quaternary structure, component of the NOP7 complex, composed of ERB1, NOP7 and YTM1. The complex is held together by ERB1, which interacts with NOP7 via its N-terminal domain and with YTM1 via a high-affinity interaction between the seven-bladed beta-propeller domains of the 2 proteins. The NOP7 complex associates with the 66S pre-ribosome.

It is found in the nucleus. The protein localises to the nucleolus. It localises to the nucleoplasm. Component of the NOP7 complex, which is required for maturation of the 25S and 5.8S ribosomal RNAs and formation of the 60S ribosome. The chain is Pescadillo homolog from Pyricularia oryzae (strain 70-15 / ATCC MYA-4617 / FGSC 8958) (Rice blast fungus).